The following is a 328-amino-acid chain: Cytochrome c biogenesis protein CcsA (328 aa).

8 helical membrane passes run 13–33 (ISFSVVSIVLTIYFFTLLVNL), 46–66 (GIVITFFGITGLLFTRWIYSG), 73–93 (LYESLIFLSWAFSIIHMVSYF), 101–121 (LNAITAPSAIFIQGFATSGLL), 146–166 (MILGYGALLCGSLLSIALLVI), 234–254 (IISLGFIFLTVGILSGAVWAN), 263–283 (WDPKETWAFITWTIFAIYLHI), and 295–315 (AIVASIGFLLIWICYFGVNLL).

Belongs to the CcmF/CycK/Ccl1/NrfE/CcsA family. In terms of assembly, may interact with Ccs1.

The protein resides in the plastid. It is found in the chloroplast thylakoid membrane. Required during biogenesis of c-type cytochromes (cytochrome c6 and cytochrome f) at the step of heme attachment. The protein is Cytochrome c biogenesis protein CcsA of Barbarea verna (Land cress).